Consider the following 76-residue polypeptide: Alpha/kappa-conotoxin-like pl14.3 (76 aa).

A signal peptide spans 1–27 (MPSVRSVACCCLLWMMLSVQLVTPGSP). Positions 28 to 39 (ATAQLSGQRTAR) are excised as a propeptide. 2 cysteine pairs are disulfide-bonded: cysteine 46–cysteine 61 and cysteine 50–cysteine 63. The residue at position 64 (aspartate 64) is an Aspartic acid 1-amide. The propeptide occupies 65–76 (GKRDVVSSSMAV).

Belongs to the conotoxin J superfamily. Expressed by the venom duct.

The protein localises to the secreted. Functionally, highly inhibits both nicotinic acetylcholine receptors (neuronal (alpha-3/beta-4) and muscular (alpha-1/beta-1/epsilon/delta) subtypes) and the voltage-gated potassium channel Kv1.6/KCNA6 subtype. The sequence is that of Alpha/kappa-conotoxin-like pl14.3 from Conus planorbis (Planorbis cone).